A 366-amino-acid chain; its full sequence is Carbamoyl phosphate synthase small chain (366 aa).

The segment at 1–170 (MLKKRYLVLE…TKSPYVSTGY (170 aa)) is CPSase. Residues Ser47, Gly221, and Gly223 each contribute to the L-glutamine site. A Glutamine amidotransferase type-1 domain is found at 173–360 (SVVLVDFGKK…IDMINEYKTK (188 aa)). Cys248 acts as the Nucleophile in catalysis. 5 residues coordinate L-glutamine: Leu249, Gln252, Asn290, Gly292, and Tyr293. Residues His333 and Glu335 contribute to the active site.

The protein belongs to the CarA family. As to quaternary structure, composed of two chains; the small (or glutamine) chain promotes the hydrolysis of glutamine to ammonia, which is used by the large (or ammonia) chain to synthesize carbamoyl phosphate. Tetramer of heterodimers (alpha,beta)4.

The catalysed reaction is hydrogencarbonate + L-glutamine + 2 ATP + H2O = carbamoyl phosphate + L-glutamate + 2 ADP + phosphate + 2 H(+). It carries out the reaction L-glutamine + H2O = L-glutamate + NH4(+). It functions in the pathway amino-acid biosynthesis; L-arginine biosynthesis; carbamoyl phosphate from bicarbonate: step 1/1. It participates in pyrimidine metabolism; UMP biosynthesis via de novo pathway; (S)-dihydroorotate from bicarbonate: step 1/3. Its function is as follows. Small subunit of the glutamine-dependent carbamoyl phosphate synthetase (CPSase). CPSase catalyzes the formation of carbamoyl phosphate from the ammonia moiety of glutamine, carbonate, and phosphate donated by ATP, constituting the first step of 2 biosynthetic pathways, one leading to arginine and/or urea and the other to pyrimidine nucleotides. The small subunit (glutamine amidotransferase) binds and cleaves glutamine to supply the large subunit with the substrate ammonia. The sequence is that of Carbamoyl phosphate synthase small chain from Staphylococcus saprophyticus subsp. saprophyticus (strain ATCC 15305 / DSM 20229 / NCIMB 8711 / NCTC 7292 / S-41).